Reading from the N-terminus, the 340-residue chain is Phospho-N-acetylmuramoyl-pentapeptide-transferase (340 aa).

A run of 10 helical transmembrane segments spans residues 3 to 23, 53 to 73, 79 to 99, 119 to 139, 144 to 164, 176 to 196, 200 to 220, 227 to 247, 250 to 270, and 315 to 335; these read MSLI…PHFI, GGTV…FHVF, AYGA…IGFL, MALQ…PSGT, IGGL…FWIV, IDGL…IIAF, ELAI…FFVF, VFMG…ISIA, VEWT…SVML, and VDAF…WMVL.

This sequence belongs to the glycosyltransferase 4 family. MraY subfamily. Mg(2+) serves as cofactor.

It is found in the cell membrane. It catalyses the reaction UDP-N-acetyl-alpha-D-muramoyl-L-alanyl-gamma-D-glutamyl-L-lysyl-D-alanyl-D-alanine + di-trans,octa-cis-undecaprenyl phosphate = Mur2Ac(oyl-L-Ala-gamma-D-Glu-L-Lys-D-Ala-D-Ala)-di-trans,octa-cis-undecaprenyl diphosphate + UMP. It functions in the pathway cell wall biogenesis; peptidoglycan biosynthesis. In terms of biological role, catalyzes the initial step of the lipid cycle reactions in the biosynthesis of the cell wall peptidoglycan: transfers peptidoglycan precursor phospho-MurNAc-pentapeptide from UDP-MurNAc-pentapeptide onto the lipid carrier undecaprenyl phosphate, yielding undecaprenyl-pyrophosphoryl-MurNAc-pentapeptide, known as lipid I. The chain is Phospho-N-acetylmuramoyl-pentapeptide-transferase from Streptococcus thermophilus (strain CNRZ 1066).